The sequence spans 137 residues: Ribonuclease P protein component (137 aa).

This sequence belongs to the RnpA family. Consists of a catalytic RNA component (M1 or rnpB) and a protein subunit.

The enzyme catalyses Endonucleolytic cleavage of RNA, removing 5'-extranucleotides from tRNA precursor.. In terms of biological role, RNaseP catalyzes the removal of the 5'-leader sequence from pre-tRNA to produce the mature 5'-terminus. It can also cleave other RNA substrates such as 4.5S RNA. The protein component plays an auxiliary but essential role in vivo by binding to the 5'-leader sequence and broadening the substrate specificity of the ribozyme. The protein is Ribonuclease P protein component of Porphyromonas gingivalis (strain ATCC 33277 / DSM 20709 / CIP 103683 / JCM 12257 / NCTC 11834 / 2561).